A 500-amino-acid polypeptide reads, in one-letter code: Protein shisa-6 (500 aa).

A signal peptide spans 1–25; the sequence is MALRRLLLLLLLSLESLDLLPSVHG. Topologically, residues 26–174 are extracellular; it reads ARGRAANRTL…NKYDPEKDKT (149 aa). Residues asparagine 32 and asparagine 59 are each glycosylated (N-linked (GlcNAc...) asparagine). A disordered region spans residues 52–73; sequence ARGGRELNGTARAPGIPEAGSR. The helical transmembrane segment at 175–195 threads the bilayer; the sequence is NFTVYITCGVIAFVIVAGVFA. The Cytoplasmic segment spans residues 196-500; that stretch reads KVSYDKAHRP…YTASKTEVTV (305 aa). Over residues 240-255 the composition is skewed to polar residues; it reads TSPKENTPVRSSSKNH. Disordered regions lie at residues 240–269 and 349–378; these read TSPK…PEKP and SQQK…DRGL. Phosphoserine is present on residues serine 391, serine 397, and serine 409. At threonine 433 the chain carries Phosphothreonine. The interval 444-470 is disordered; that stretch reads MHSHPSASNNSYATLGQSQTAAKRHAF. The segment covering 448-464 has biased composition (polar residues); the sequence is PSASNNSYATLGQSQTA. Threonine 477 is modified (phosphothreonine). Residues 497–500 carry the PDZ-binding motif; that stretch reads EVTV.

The protein belongs to the shisa family. In terms of assembly, component of the postsynaptic hippocampal AMPA-type glutamate receptor (AMPAR) complex, at least composed of pore forming AMPAR subunits GRIA1, GRIA2 and GRIA3 and AMPAR auxiliary proteins SHISA6 and SHISA7. Interacts (via PDZ-binding motif) with DLG4/PSD-95 (via PDZ domain); the interaction is direct. As to expression, expressed in the developing ventral mesencephalon.

The protein resides in the membrane. It is found in the postsynaptic density. Involved in maintenance of high-frequency synaptic transmission at hippocampal CA3-CA1 synapses. Regulates AMPA-type glutamate receptor (AMPAR) immobilization at postsynaptic density keeping the channels in an activated state in the presence of glutamate and preventing synaptic depression. May play a role in self-renewal and differentiation of spermatogonial stem cells by inhibiting canonical Wnt signaling pathway. The polypeptide is Protein shisa-6 (Homo sapiens (Human)).